A 529-amino-acid chain; its full sequence is GMP synthase [glutamine-hydrolyzing] (529 aa).

The Glutamine amidotransferase type-1 domain occupies 9-211 (RILILDFGSQ…VKDICGCECL (203 aa)). Cys86 acts as the Nucleophile in catalysis. Active-site residues include His185 and Glu187. A GMPS ATP-PPase domain is found at 212-404 (WTPATIIDDA…LGLPYDMLYR (193 aa)). 239–245 (SGGVDSS) contacts ATP.

As to quaternary structure, homodimer.

It carries out the reaction XMP + L-glutamine + ATP + H2O = GMP + L-glutamate + AMP + diphosphate + 2 H(+). Its pathway is purine metabolism; GMP biosynthesis; GMP from XMP (L-Gln route): step 1/1. In terms of biological role, catalyzes the synthesis of GMP from XMP. The polypeptide is GMP synthase [glutamine-hydrolyzing] (Aeromonas hydrophila subsp. hydrophila (strain ATCC 7966 / DSM 30187 / BCRC 13018 / CCUG 14551 / JCM 1027 / KCTC 2358 / NCIMB 9240 / NCTC 8049)).